A 31-amino-acid chain; its full sequence is Glucagon-5 (31 aa).

The protein belongs to the glucagon family.

The protein localises to the secreted. In terms of biological role, glucagon plays a key role in glucose metabolism and homeostasis. Regulates blood glucose by increasing gluconeogenesis and decreasing glycolysis. The protein is Glucagon-5 of Huso dauricus (Kaluga sturgeon).